The sequence spans 415 residues: Histidine--tRNA ligase (415 aa).

It belongs to the class-II aminoacyl-tRNA synthetase family. In terms of assembly, homodimer.

It is found in the cytoplasm. The enzyme catalyses tRNA(His) + L-histidine + ATP = L-histidyl-tRNA(His) + AMP + diphosphate + H(+). In Clostridium botulinum (strain Langeland / NCTC 10281 / Type F), this protein is Histidine--tRNA ligase.